The sequence spans 159 residues: Large ribosomal subunit protein uL13 (159 aa).

Belongs to the universal ribosomal protein uL13 family. Part of the 50S ribosomal subunit.

This protein is one of the early assembly proteins of the 50S ribosomal subunit, although it is not seen to bind rRNA by itself. It is important during the early stages of 50S assembly. In Methanopyrus kandleri (strain AV19 / DSM 6324 / JCM 9639 / NBRC 100938), this protein is Large ribosomal subunit protein uL13.